The primary structure comprises 170 residues: Ribosome maturation factor RimM (170 aa).

Residues 98–170 (PDEYYWVDLE…LIVVDWDPDF (73 aa)) form the PRC barrel domain.

It belongs to the RimM family. Binds ribosomal protein uS19.

It localises to the cytoplasm. In terms of biological role, an accessory protein needed during the final step in the assembly of 30S ribosomal subunit, possibly for assembly of the head region. Essential for efficient processing of 16S rRNA. May be needed both before and after RbfA during the maturation of 16S rRNA. It has affinity for free ribosomal 30S subunits but not for 70S ribosomes. The sequence is that of Ribosome maturation factor RimM from Xanthomonas axonopodis pv. citri (strain 306).